The primary structure comprises 234 residues: Small ribosomal subunit protein uS3 (234 aa).

The region spanning 39–107 (VRKFLNKELA…PAQINIAEVK (69 aa)) is the KH type-2 domain.

Belongs to the universal ribosomal protein uS3 family. Part of the 30S ribosomal subunit. Forms a tight complex with proteins S10 and S14.

Functionally, binds the lower part of the 30S subunit head. Binds mRNA in the 70S ribosome, positioning it for translation. The chain is Small ribosomal subunit protein uS3 from Haemophilus ducreyi (strain 35000HP / ATCC 700724).